The chain runs to 192 residues: Thymidine kinase (192 aa).

Residues 9-16 and 85-88 each bind ATP; these read GAMNSGKS and DEVQ. Glu-86 (proton acceptor) is an active-site residue. The Zn(2+) site is built by Cys-143, Cys-146, Cys-181, and Cys-184.

This sequence belongs to the thymidine kinase family. In terms of assembly, homotetramer.

The protein resides in the cytoplasm. It carries out the reaction thymidine + ATP = dTMP + ADP + H(+). The chain is Thymidine kinase from Shouchella clausii (strain KSM-K16) (Alkalihalobacillus clausii).